We begin with the raw amino-acid sequence, 609 residues long: Heat shock factor protein (609 aa).

The span at 1-33 (MIQTASTISSNGGTNQGMESSSANSPEMNGTQN) shows a compositional bias: polar residues. The tract at residues 1–47 (MIQTASTISSNGGTNQGMESSSANSPEMNGTQNSMSVGMSGSGSSQN) is disordered. Over residues 34–45 (SMSVGMSGSGSS) the composition is skewed to low complexity. The DNA-binding element occupies 50–156 (ITQFSNKLYN…LLCLVTRKKA (107 aa)). 4 disordered regions span residues 255 to 298 (PTVS…GKYR), 310 to 371 (SSFN…TDPK), 411 to 445 (NNTS…QPVQ), and 567 to 609 (SNGN…SIGA). Composition is skewed to polar residues over residues 257-277 (VSPT…TTAN), 339-360 (DSFN…TDVP), 422-443 (YRGS…NLQP), and 567-597 (SNGN…SSPR). Phosphoserine is present on serine 350. Residues 598 to 609 (QVRKKRKSSIGA) are compositionally biased toward basic residues.

Belongs to the HSF family. In terms of assembly, homotrimer.

It localises to the nucleus. Functionally, DNA-binding protein that specifically binds heat shock promoter elements (HSE) and activates transcription. Also required for growth at normal temperatures. The chain is Heat shock factor protein (hsf1) from Schizosaccharomyces pombe (strain 972 / ATCC 24843) (Fission yeast).